Here is a 1060-residue protein sequence, read N- to C-terminus: Probable serine/threonine-protein kinase MARK-A (1060 aa).

Basic and acidic residues-rich tracts occupy residues Met1–Arg11 and His23–Gln37. Disordered stretches follow at residues Met1–Gln52 and Asn67–Val88. 2 stretches are compositionally biased toward low complexity: residues Gln38–Gln52 and Lys68–Val88. In terms of domain architecture, Protein kinase spans Tyr109–Leu361. Residues Ile115 to Val123 and Lys139 each bind ATP. The active-site Proton acceptor is Asp232. The segment covering Ile409 to Thr475 has biased composition (low complexity). 4 disordered regions span residues Ile409–Glu488, Gly560–Cys701, Leu714–Ser886, and Asp899–Arg966. In terms of domain architecture, UBA spans Glu488 to Gly528. A compositionally biased stretch (polar residues) spans Thr577–Thr594. Low complexity-rich tracts occupy residues Gln603 to Gln613, Gln620 to Asn637, Ser650 to Pro699, and Thr720 to Asn760. Residues Leu761–Ala770 show a composition bias toward polar residues. Low complexity-rich tracts occupy residues Asn771–Ser799 and Gln811–Ser831. The span at Gln837–Asp846 shows a compositional bias: basic and acidic residues. Composition is skewed to low complexity over residues Asn904–Thr926 and Gln935–Pro965. A KA1 domain is found at Ile1008–Leu1057.

Belongs to the protein kinase superfamily. CAMK Ser/Thr protein kinase family. SNF1 subfamily.

It catalyses the reaction L-seryl-[protein] + ATP = O-phospho-L-seryl-[protein] + ADP + H(+). It carries out the reaction L-threonyl-[protein] + ATP = O-phospho-L-threonyl-[protein] + ADP + H(+). The polypeptide is Probable serine/threonine-protein kinase MARK-A (mrkA) (Dictyostelium discoideum (Social amoeba)).